The primary structure comprises 434 residues: Cyclic 2,3-diphosphoglycerate synthetase (434 aa).

Belongs to the cyclic 2,3-diphosphoglycerate synthetase family.

The protein localises to the cytoplasm. It catalyses the reaction (2R)-2,3-bisphosphoglycerate + ATP + H(+) = cyclic (2R)-2,3-bisphosphoglycerate + ADP + phosphate. Catalyzes the formation of cyclic 2,3-diphosphoglycerate (cDPG) by formation of an intramolecular phosphoanhydride bond at the expense of ATP. This Thermococcus sibiricus (strain DSM 12597 / MM 739) protein is Cyclic 2,3-diphosphoglycerate synthetase.